The sequence spans 217 residues: Oxygen-evolving enhancer protein 3, chloroplastic (217 aa).

Disordered regions lie at residues 1–25 and 73–95; these read MAQA…RRAG and PIKL…SDQA. A chloroplast-targeting transit peptide spans 1 to 63; that stretch reads MAQAMASMTG…ATGIAGGALA (63 aa).

This sequence belongs to the PsbQ family.

The protein resides in the plastid. The protein localises to the chloroplast thylakoid membrane. The sequence is that of Oxygen-evolving enhancer protein 3, chloroplastic from Oryza sativa subsp. indica (Rice).